Consider the following 518-residue polypeptide: Protein nucleotidyltransferase YdiU (518 aa).

Positions 1 to 10 (MTHLRFDNRL) are enriched in basic and acidic residues. Residues 1–23 (MTHLRFDNRLRQQLPGDPEEGSR) form a disordered region. The ATP site is built by glycine 100, glycine 102, arginine 103, lysine 123, aspartate 135, glycine 136, arginine 193, and arginine 200. The active-site Proton acceptor is the aspartate 270. 2 residues coordinate Mg(2+): asparagine 271 and aspartate 280. An ATP-binding site is contributed by aspartate 280.

It belongs to the SELO family. Mg(2+) serves as cofactor. Requires Mn(2+) as cofactor.

It carries out the reaction L-seryl-[protein] + ATP = 3-O-(5'-adenylyl)-L-seryl-[protein] + diphosphate. The catalysed reaction is L-threonyl-[protein] + ATP = 3-O-(5'-adenylyl)-L-threonyl-[protein] + diphosphate. It catalyses the reaction L-tyrosyl-[protein] + ATP = O-(5'-adenylyl)-L-tyrosyl-[protein] + diphosphate. The enzyme catalyses L-histidyl-[protein] + UTP = N(tele)-(5'-uridylyl)-L-histidyl-[protein] + diphosphate. It carries out the reaction L-seryl-[protein] + UTP = O-(5'-uridylyl)-L-seryl-[protein] + diphosphate. The catalysed reaction is L-tyrosyl-[protein] + UTP = O-(5'-uridylyl)-L-tyrosyl-[protein] + diphosphate. Its function is as follows. Nucleotidyltransferase involved in the post-translational modification of proteins. It can catalyze the addition of adenosine monophosphate (AMP) or uridine monophosphate (UMP) to a protein, resulting in modifications known as AMPylation and UMPylation. This Xanthomonas axonopodis pv. citri (strain 306) protein is Protein nucleotidyltransferase YdiU.